We begin with the raw amino-acid sequence, 148 residues long: MPLSGEYAPSPLDWSREQADTYMKSGGTEGTQLQGKPVILLTTVGAKTGKLRKTPLMRVEHDGQYAIVASLGGAPKNPVWYHNVVKNPRVELQDGTVTGDYDAREVFGDEKAIWWQRAVAVWPDYASYQTKTDRQIPVFVLTPVRAGG.

Coenzyme F420-(gamma-Glu)n is bound by residues 46 to 48 (AKT), 52 to 57 (RKTPLM), 68 to 71 (VASL), 79 to 83 (VWYHN), and Y125.

Belongs to the F420H(2)-dependent quinone reductase family.

The protein resides in the cell membrane. It catalyses the reaction oxidized coenzyme F420-(gamma-L-Glu)(n) + a quinol + H(+) = reduced coenzyme F420-(gamma-L-Glu)(n) + a quinone. Its function is as follows. Involved in a F420-dependent anti-oxidant mechanism that protects M.tuberculosis against oxidative stress and bactericidal agents. Catalyzes the F420H(2)-dependent two-electron reduction of quinones to dihydroquinones, thereby preventing the formation of cytotoxic semiquinones obtained by the one-electron reduction pathway. In vitro, catalyzes the reduction of menadione to menadiol; since menaquinone is the sole quinone electron carrier in the respiratory chain in M.tuberculosis, the physiological electron acceptor for Fqr-mediated F420H(2) oxidation is therefore likely to be the endogenous menaquinone found in the membrane fraction of M.tuberculosis. In Mycobacterium tuberculosis (strain CDC 1551 / Oshkosh), this protein is F420H(2)-dependent quinone reductase MT1609.